Reading from the N-terminus, the 257-residue chain is Serine/arginine-rich splicing factor 1 (257 aa).

Ser2 carries the N-acetylserine modification. In terms of domain architecture, RRM 1 spans 16–91; it reads CRIYVGNLPP…YRLRVEFPRS (76 aa). The tract at residues 88-116 is disordered; sequence FPRSGRGTGRGGGGGGGGGAPRGRYGPPS. Positions 93–108 are enriched in gly residues; sequence RGTGRGGGGGGGGGAP. One can recognise an RRM 2 domain in the interval 121–195; sequence YRVIVSGLPP…ETAYIRVKVD (75 aa).

It localises to the cytoplasm. It is found in the nucleus speckle. Functionally, may play a role in preventing exon skipping, ensuring the accuracy of splicing and regulating alternative splicing. The sequence is that of Serine/arginine-rich splicing factor 1 (SRSF1) from Gallus gallus (Chicken).